The following is a 65-amino-acid chain: Large ribosomal subunit protein bL35 (65 aa).

Belongs to the bacterial ribosomal protein bL35 family.

The protein is Large ribosomal subunit protein bL35 of Enterobacter sp. (strain 638).